The sequence spans 224 residues: Urease accessory protein UreF 2 (224 aa).

Belongs to the UreF family. UreD, UreF and UreG form a complex that acts as a GTP-hydrolysis-dependent molecular chaperone, activating the urease apoprotein by helping to assemble the nickel containing metallocenter of UreC. The UreE protein probably delivers the nickel.

It localises to the cytoplasm. Its function is as follows. Required for maturation of urease via the functional incorporation of the urease nickel metallocenter. This Pseudomonas syringae pv. tomato (strain ATCC BAA-871 / DC3000) protein is Urease accessory protein UreF 2.